Consider the following 342-residue polypeptide: uncharacterized protein (342 aa).

9-31 (LIFGGTTGIGLMTTIDFIIHNTS) provides a ligand contact to NADP(+). Serine 208 contributes to the substrate binding site. Catalysis depends on tyrosine 222, which acts as the Proton acceptor.

Belongs to the short-chain dehydrogenases/reductases (SDR) family.

This is an uncharacterized protein from Acanthamoeba polyphaga (Amoeba).